The sequence spans 358 residues: UPF0575 protein C19orf67 (358 aa).

The tract at residues 1-84 (MATEQWFEGS…PGPAPPRLSL (84 aa)) is disordered. Pro residues-rich tracts occupy residues 17-32 (ETPPPDALEPGTPPCG) and 70-80 (PLVPRPGPAPP).

This sequence belongs to the UPF0575 family.

In Homo sapiens (Human), this protein is UPF0575 protein C19orf67 (C19orf67).